Reading from the N-terminus, the 177-residue chain is Large ribosomal subunit protein uL6 (177 aa).

It belongs to the universal ribosomal protein uL6 family. Part of the 50S ribosomal subunit.

Functionally, this protein binds to the 23S rRNA, and is important in its secondary structure. It is located near the subunit interface in the base of the L7/L12 stalk, and near the tRNA binding site of the peptidyltransferase center. The protein is Large ribosomal subunit protein uL6 of Methanococcoides burtonii (strain DSM 6242 / NBRC 107633 / OCM 468 / ACE-M).